The following is a 417-amino-acid chain: 3-isopropylmalate dehydratase large subunit (417 aa).

3 residues coordinate [4Fe-4S] cluster: Cys298, Cys358, and Cys361.

It belongs to the aconitase/IPM isomerase family. LeuC type 2 subfamily. Heterodimer of LeuC and LeuD. The cofactor is [4Fe-4S] cluster.

The enzyme catalyses (2R,3S)-3-isopropylmalate = (2S)-2-isopropylmalate. Its pathway is amino-acid biosynthesis; L-leucine biosynthesis; L-leucine from 3-methyl-2-oxobutanoate: step 2/4. Functionally, catalyzes the isomerization between 2-isopropylmalate and 3-isopropylmalate, via the formation of 2-isopropylmaleate. The chain is 3-isopropylmalate dehydratase large subunit from Thermoanaerobacter pseudethanolicus (strain ATCC 33223 / 39E) (Clostridium thermohydrosulfuricum).